Consider the following 505-residue polypeptide: ATP synthase subunit alpha (505 aa).

ATP is bound at residue 172–179 (GDRQIGKT).

The protein belongs to the ATPase alpha/beta chains family. F-type ATPases have 2 components, CF(1) - the catalytic core - and CF(0) - the membrane proton channel. CF(1) has five subunits: alpha(3), beta(3), gamma(1), delta(1), epsilon(1). CF(0) has three main subunits: a(1), b(2) and c(9-12). The alpha and beta chains form an alternating ring which encloses part of the gamma chain. CF(1) is attached to CF(0) by a central stalk formed by the gamma and epsilon chains, while a peripheral stalk is formed by the delta and b chains.

Its subcellular location is the cell inner membrane. It catalyses the reaction ATP + H2O + 4 H(+)(in) = ADP + phosphate + 5 H(+)(out). In terms of biological role, produces ATP from ADP in the presence of a proton gradient across the membrane. The alpha chain is a regulatory subunit. This Syntrophobacter fumaroxidans (strain DSM 10017 / MPOB) protein is ATP synthase subunit alpha.